A 176-amino-acid chain; its full sequence is Late embryogenesis abundant protein 49 (176 aa).

2 SMP domains span residues threonine 49–lysine 106 and asparagine 115–histidine 171.

The protein belongs to the LEA type SMP family.

Its subcellular location is the cytoplasm. It is found in the nucleus. LEA proteins are late embryonic proteins abundant in higher plant seed embryos. The function of those proteins is not known. The polypeptide is Late embryogenesis abundant protein 49 (Arabidopsis thaliana (Mouse-ear cress)).